We begin with the raw amino-acid sequence, 309 residues long: tRNA-cytidine(32) 2-sulfurtransferase (309 aa).

Positions Ser-47 to Ser-52 match the PP-loop motif motif. [4Fe-4S] cluster-binding residues include Cys-122, Cys-125, and Cys-213.

This sequence belongs to the TtcA family. As to quaternary structure, homodimer. Mg(2+) serves as cofactor. The cofactor is [4Fe-4S] cluster.

The protein localises to the cytoplasm. It catalyses the reaction cytidine(32) in tRNA + S-sulfanyl-L-cysteinyl-[cysteine desulfurase] + AH2 + ATP = 2-thiocytidine(32) in tRNA + L-cysteinyl-[cysteine desulfurase] + A + AMP + diphosphate + H(+). The protein operates within tRNA modification. Its function is as follows. Catalyzes the ATP-dependent 2-thiolation of cytidine in position 32 of tRNA, to form 2-thiocytidine (s(2)C32). The sulfur atoms are provided by the cysteine/cysteine desulfurase (IscS) system. This chain is tRNA-cytidine(32) 2-sulfurtransferase, found in Erwinia tasmaniensis (strain DSM 17950 / CFBP 7177 / CIP 109463 / NCPPB 4357 / Et1/99).